The following is a 163-amino-acid chain: Phosphopantetheine adenylyltransferase (163 aa).

Serine 9 contributes to the substrate binding site. Residues 9–10 (SF) and histidine 17 each bind ATP. Lysine 41, threonine 73, and arginine 87 together coordinate substrate. ATP contacts are provided by residues 88–90 (GLR), glutamate 98, and 123–129 (YSYLSSS).

The protein belongs to the bacterial CoaD family. As to quaternary structure, homohexamer. The cofactor is Mg(2+).

The protein localises to the cytoplasm. The enzyme catalyses (R)-4'-phosphopantetheine + ATP + H(+) = 3'-dephospho-CoA + diphosphate. Its pathway is cofactor biosynthesis; coenzyme A biosynthesis; CoA from (R)-pantothenate: step 4/5. Functionally, reversibly transfers an adenylyl group from ATP to 4'-phosphopantetheine, yielding dephospho-CoA (dPCoA) and pyrophosphate. The sequence is that of Phosphopantetheine adenylyltransferase from Lachnoclostridium phytofermentans (strain ATCC 700394 / DSM 18823 / ISDg) (Clostridium phytofermentans).